Consider the following 424-residue polypeptide: Arogenate dehydratase 3, chloroplastic (424 aa).

A chloroplast-targeting transit peptide spans 1-24 (MRTLLPSHTPATVTTAARRRHVIH). Positions 57-71 (EQSESLSSNSNGSSS) are enriched in low complexity. Positions 57-77 (EQSESLSSNSNGSSSYHVSAV) are disordered. One can recognise a Prephenate dehydratase domain in the interval 122–299 (RVAYQGVPGA…NVTRFVMLAR (178 aa)). The 92-residue stretch at 313–404 (SIVFAHEKGT…SFLRVLGSYP (92 aa)) folds into the ACT domain.

May interact with GPA1. In terms of tissue distribution, expressed in roots, leaves, stems, flowers and siliques.

It is found in the plastid. The protein resides in the chloroplast stroma. It catalyses the reaction L-arogenate + H(+) = L-phenylalanine + CO2 + H2O. The protein operates within amino-acid biosynthesis; L-phenylalanine biosynthesis; L-phenylalanine from L-arogenate: step 1/1. In terms of biological role, converts the prephenate produced from the shikimate-chorismate pathway into phenylalanine. Together with GCR1 and GPA1, required for blue light-mediated synthesis of phenylpyruvate and subsequently of phenylalanine (Phe), in etiolated seedlings. In Arabidopsis thaliana (Mouse-ear cress), this protein is Arogenate dehydratase 3, chloroplastic.